The chain runs to 378 residues: Anhydro-N-acetylmuramic acid kinase 2 (378 aa).

Residue 14–22 (GTVLDGNID) coordinates ATP.

The protein belongs to the anhydro-N-acetylmuramic acid kinase family.

It carries out the reaction 1,6-anhydro-N-acetyl-beta-muramate + ATP + H2O = N-acetyl-D-muramate 6-phosphate + ADP + H(+). It participates in amino-sugar metabolism; 1,6-anhydro-N-acetylmuramate degradation. Its pathway is cell wall biogenesis; peptidoglycan recycling. Its function is as follows. Catalyzes the specific phosphorylation of 1,6-anhydro-N-acetylmuramic acid (anhMurNAc) with the simultaneous cleavage of the 1,6-anhydro ring, generating MurNAc-6-P. Is required for the utilization of anhMurNAc either imported from the medium or derived from its own cell wall murein, and thus plays a role in cell wall recycling. The polypeptide is Anhydro-N-acetylmuramic acid kinase 2 (Jannaschia sp. (strain CCS1)).